A 314-amino-acid chain; its full sequence is NAD-dependent protein lipoamidase sirtuin-4, mitochondrial (314 aa).

Residues Met-1–Ser-28 constitute a mitochondrion transit peptide. Positions Pro-37–Cys-314 constitute a Deacetylase sirtuin-type domain. NAD(+) contacts are provided by residues Gly-62–Tyr-82 and Gln-143–Asp-146. Catalysis depends on His-161, which acts as the Proton acceptor. 4 residues coordinate Zn(2+): Cys-169, Cys-172, Cys-220, and Cys-223. NAD(+) contacts are provided by residues Gly-260–Ser-262, Asn-286–Gly-288, and Cys-304.

Belongs to the sirtuin family. Class II subfamily. Interacts with GLUD1, IDE and SLC25A5. Interacts with DLAT and PDHX. Interacts with MCCC1 (via the biotin carboxylation domain). Interacts with PCCA and PC. Zn(2+) is required as a cofactor. Detected in vascular smooth muscle and striated muscle. Detected in insulin-producing beta-cells in pancreas islets of Langerhans (at protein level). Widely expressed. Weakly expressed in leukocytes and fetal thymus.

It is found in the mitochondrion matrix. It catalyses the reaction N(6)-[(R)-lipoyl]-L-lysyl-[protein] + NAD(+) + H2O = 2''-O-lipoyl-ADP-D-ribose + nicotinamide + L-lysyl-[protein]. The catalysed reaction is N(6)-biotinyl-L-lysyl-[protein] + NAD(+) + H2O = 2''-O-biotinyl-ADP-D-ribose + nicotinamide + L-lysyl-[protein]. The enzyme catalyses N(6)-acetyl-L-lysyl-[protein] + NAD(+) + H2O = 2''-O-acetyl-ADP-D-ribose + nicotinamide + L-lysyl-[protein]. It carries out the reaction L-cysteinyl-[protein] + NAD(+) = S-(ADP-D-ribosyl)-L-cysteinyl-[protein] + nicotinamide + H(+). In terms of biological role, acts as a NAD-dependent protein lipoamidase, biotinylase, deacetylase and ADP-ribosyl transferase. Catalyzes more efficiently removal of lipoyl- and biotinyl- than acetyl-lysine modifications. Inhibits the pyruvate dehydrogenase complex (PDH) activity via the enzymatic hydrolysis of the lipoamide cofactor from the E2 component, DLAT, in a phosphorylation-independent manner. Catalyzes the transfer of ADP-ribosyl groups onto target proteins, including mitochondrial GLUD1, inhibiting GLUD1 enzyme activity. Acts as a negative regulator of mitochondrial glutamine metabolism by mediating mono ADP-ribosylation of GLUD1: expressed in response to DNA damage and negatively regulates anaplerosis by inhibiting GLUD1, leading to block metabolism of glutamine into tricarboxylic acid cycle and promoting cell cycle arrest. In response to mTORC1 signal, SIRT4 expression is repressed, promoting anaplerosis and cell proliferation. Acts as a tumor suppressor. Also acts as a NAD-dependent protein deacetylase: mediates deacetylation of 'Lys-471' of MLYCD, inhibiting its activity, thereby acting as a regulator of lipid homeostasis. Does not seem to deacetylate PC. Controls fatty acid oxidation by inhibiting PPARA transcriptional activation. Impairs SIRT1-PPARA interaction probably through the regulation of NAD(+) levels. Down-regulates insulin secretion. The protein is NAD-dependent protein lipoamidase sirtuin-4, mitochondrial of Homo sapiens (Human).